Here is a 134-residue protein sequence, read N- to C-terminus: Protein X (134 aa).

Residues 25-48 (SRGRPVSGPFGPLPSPSSSAVPAD) are disordered. Residues 29-47 (PVSGPFGPLPSPSSSAVPA) show a composition bias toward low complexity. Positions 68–117 (PCALRLTSARRMETTVNAHQVLPKVLHKRTLGLSAMSTTDLEAYFKDCLF) are mitochondrial targeting sequence.

The protein belongs to the orthohepadnavirus protein X family. As to quaternary structure, may form homodimer. May interact with host CEBPA, CFLAR, CREB1, DDB1, E4F1, HBXIP, HSPD1/HSP60, NFKBIA, POLR2E and SMAD4. Interacts with host SMC5-SMC6 complex and induces its degradation. Interacts with host TRPC4AP; leading to prevent ubiquitination of TRPC4AP. Interacts with host PLSCR1; this interaction promotes ubiquitination and degradation of HBx and impairs HBx-mediated cell proliferation. A fraction may be phosphorylated in insect cells and HepG2 cells, a human hepatoblastoma cell line. Phosphorylated in vitro by host protein kinase C or mitogen-activated protein kinase. N-acetylated in insect cells.

Its subcellular location is the host cytoplasm. The protein resides in the host nucleus. It is found in the host mitochondrion. Multifunctional protein that plays a role in silencing host antiviral defenses and promoting viral transcription. Does not seem to be essential for HBV infection. May be directly involved in development of cirrhosis and liver cancer (hepatocellular carcinoma). Most of cytosolic activities involve modulation of cytosolic calcium. The effect on apoptosis is controversial depending on the cell types in which the studies have been conducted. May induce apoptosis by localizing in mitochondria and causing loss of mitochondrial membrane potential. May also modulate apoptosis by binding host CFLAR, a key regulator of the death-inducing signaling complex (DISC). Promotes viral transcription by using the host E3 ubiquitin ligase DDB1 to target the SMC5-SMC6 complex to proteasomal degradation. This host complex would otherwise bind to viral episomal DNA, and prevents its transcription. Moderately stimulates transcription of many different viral and cellular transcription elements. Promoters and enhancers stimulated by HBx contain DNA binding sites for NF-kappa-B, AP-1, AP-2, c-EBP, ATF/CREB, or the calcium-activated factor NF-AT. The chain is Protein X from Homo sapiens (Human).